The primary structure comprises 108 residues: Large ribosomal subunit protein uL23 (108 aa).

This sequence belongs to the universal ribosomal protein uL23 family. In terms of assembly, part of the 50S ribosomal subunit. Contacts protein L29, and trigger factor when it is bound to the ribosome.

In terms of biological role, one of the early assembly proteins it binds 23S rRNA. One of the proteins that surrounds the polypeptide exit tunnel on the outside of the ribosome. Forms the main docking site for trigger factor binding to the ribosome. This is Large ribosomal subunit protein uL23 from Leptothrix cholodnii (strain ATCC 51168 / LMG 8142 / SP-6) (Leptothrix discophora (strain SP-6)).